The primary structure comprises 76 residues: Gallerimycin (76 aa).

A signal peptide spans 1-19; it reads MKIAFIVAISLAFLAVTSC.

Belongs to the invertebrate defensin family.

Has antifungal activity against the entomopathogenic fungus M.nisopliae, but does not display any antifungal activity against S.cerevisiae nor any antimicrobial activity against M.luteus, B.subtilis, and E.coli. This chain is Gallerimycin (LOC113523440), found in Galleria mellonella (Greater wax moth).